The sequence spans 331 residues: uncharacterized protein (331 aa).

Pentapeptide repeat domains follow at residues L20 to Q59, A60 to D99, S100 to Q139, A151 to K190, A191 to E230, A231 to R270, and A271 to S310.

This is an uncharacterized protein from Synechocystis sp. (strain ATCC 27184 / PCC 6803 / Kazusa).